Here is a 490-residue protein sequence, read N- to C-terminus: Probable cytosol aminopeptidase (490 aa).

Residues Lys-262 and Asp-267 each contribute to the Mn(2+) site. The active site involves Lys-274. Positions 285, 344, and 346 each coordinate Mn(2+). Arg-348 is a catalytic residue.

The protein belongs to the peptidase M17 family. The cofactor is Mn(2+).

Its subcellular location is the cytoplasm. It carries out the reaction Release of an N-terminal amino acid, Xaa-|-Yaa-, in which Xaa is preferably Leu, but may be other amino acids including Pro although not Arg or Lys, and Yaa may be Pro. Amino acid amides and methyl esters are also readily hydrolyzed, but rates on arylamides are exceedingly low.. The enzyme catalyses Release of an N-terminal amino acid, preferentially leucine, but not glutamic or aspartic acids.. In terms of biological role, presumably involved in the processing and regular turnover of intracellular proteins. Catalyzes the removal of unsubstituted N-terminal amino acids from various peptides. The sequence is that of Probable cytosol aminopeptidase from Mannheimia succiniciproducens (strain KCTC 0769BP / MBEL55E).